The primary structure comprises 436 residues: GTPase Der (436 aa).

EngA-type G domains lie at 4–167 (PVVA…PEVE) and 174–350 (VRVA…EQRT). GTP is bound by residues 10–17 (GRPNVGKS), 57–61 (DTGGL), 120–123 (NKVD), 180–187 (GRPNVGKS), 227–231 (DTAGL), and 292–295 (NKWD). In terms of domain architecture, KH-like spans 351–435 (RRISTSEVND…PLRIILRRKN (85 aa)).

It belongs to the TRAFAC class TrmE-Era-EngA-EngB-Septin-like GTPase superfamily. EngA (Der) GTPase family. Associates with the 50S ribosomal subunit.

GTPase that plays an essential role in the late steps of ribosome biogenesis. The polypeptide is GTPase Der (Gemmatimonas aurantiaca (strain DSM 14586 / JCM 11422 / NBRC 100505 / T-27)).